A 547-amino-acid chain; its full sequence is Glucose-6-phosphate isomerase (547 aa).

Glutamate 353 acts as the Proton donor in catalysis. Active-site residues include histidine 384 and lysine 512.

It belongs to the GPI family.

Its subcellular location is the cytoplasm. It carries out the reaction alpha-D-glucose 6-phosphate = beta-D-fructose 6-phosphate. It participates in carbohydrate biosynthesis; gluconeogenesis. Its pathway is carbohydrate degradation; glycolysis; D-glyceraldehyde 3-phosphate and glycerone phosphate from D-glucose: step 2/4. In terms of biological role, catalyzes the reversible isomerization of glucose-6-phosphate to fructose-6-phosphate. In Glaesserella parasuis serovar 5 (strain SH0165) (Haemophilus parasuis), this protein is Glucose-6-phosphate isomerase.